Consider the following 485-residue polypeptide: Amino acid permease 1 (485 aa).

The span at 1 to 15 shows a compositional bias: polar residues; the sequence is MKSFNTEGHNHSTAE. The disordered stretch occupies residues 1–35; that stretch reads MKSFNTEGHNHSTAESGDAYTVSDPTKNVDEDGRE. Topologically, residues 1–40 are cytoplasmic; the sequence is MKSFNTEGHNHSTAESGDAYTVSDPTKNVDEDGREKRTGT. 2 consecutive transmembrane segments (helical) span residues 41–61 and 62–82; these read WLTA…LSLA and WAIA…FSFI. At 83-129 the chain is on the cytoplasmic side; it reads TYFTSTMLADCYRAPDPVTGKRNYTYMDVVRSYLGGRKVQLCGVAQY. The chain crosses the membrane as a helical span at residues 130–150; it reads GNLIGVTVGYTITASISLVAV. Residues 151 to 166 are Extracellular-facing; the sequence is GKSNCFHDKGHTADCT. Residues 167–187 form a helical membrane-spanning segment; that stretch reads ISNYPYMAVFGIIQVILSQIP. Residues 188-194 lie on the Cytoplasmic side of the membrane; it reads NFHKLSF. A helical transmembrane segment spans residues 195 to 215; sequence LSIMAAVMSFTYATIGIGLAI. Residues 216-245 are Extracellular-facing; sequence ATVAGGKVGKTSMTGTAVGVDVTAAQKIWR. A helical transmembrane segment spans residues 246 to 266; it reads SFQAVGDIAFAYAYATVLIEI. Residues 267–285 are Cytoplasmic-facing; that stretch reads QDTLRSSPAENKAMKRASL. Residues 286-306 form a helical membrane-spanning segment; the sequence is VGVSTTTFFYILCGCIGYAAF. Topologically, residues 307 to 318 are extracellular; the sequence is GNNAPGDFLTDF. The helical transmembrane segment at 319–339 threads the bilayer; the sequence is GFFEPFWLIDFANACIAVHLI. At 340–394 the chain is on the cytoplasmic side; sequence GAYQVFAQPIFQFVEKKCNRNYPDNKFITSEYSVNVPFLGKFNISLFRLVWRTAY. The next 2 membrane-spanning stretches (helical) occupy residues 395-415 and 416-436; these read VVIT…LGLI and GAAS…IAQT. The Cytoplasmic segment spans residues 437–450; that stretch reads KIKKYSARWIALKT. Residues 451–471 traverse the membrane as a helical segment; the sequence is MCYVCLIVSLLAAAGSIAGLI. The Extracellular segment spans residues 472–485; that stretch reads SSVKTYKPFRTMHE.

Belongs to the amino acid/polyamine transporter 2 family. Amino acid/auxin permease (AAAP) (TC 2.A.18.2) subfamily. Highly expressed in developing pods. Found in the endosperm and in the storage parenchyma and the outer epidermis cells of the developing embryo. Lower levels of expression in flowers, in the vascular system of the cotyledon and in the root epidermal cells, including root hairs and throughout the root tip.

The protein resides in the cell membrane. With respect to regulation, inhibited by carbonylcyanide m-chlorophenylhydrazone and diethylpyrocarbonate (DEPC). Functionally, amino acid-proton symporter. Stereospecific transporter with a broad specificity for histidine, glutamate and neutral amino acids. Reduced affinities for asparagine and valine. Involved in amino acid uptake from the apoplastic cavity into the embryo cells for storage protein accumulation and in root amino acid uptake. This Arabidopsis thaliana (Mouse-ear cress) protein is Amino acid permease 1 (AAP1).